A 309-amino-acid chain; its full sequence is Protein FdhE homolog (309 aa).

This sequence belongs to the FdhE family.

The protein localises to the cytoplasm. In terms of biological role, necessary for formate dehydrogenase activity. The polypeptide is Protein FdhE homolog (Yersinia pestis bv. Antiqua (strain Antiqua)).